Reading from the N-terminus, the 475-residue chain is MAKTNSTSKNNKLEIKSVFAYQAFDSRGFPTVACEVVLNDGSKGLSMVSSGASTGEKEALELRDGGTKYHGKGVTKAVNNINKKIGPKILGVDATLQTQIDEFMIELDGTKTKAKLGANAILAVSMAVCRAAAKSLNLPLYQYIAKKVAKVKGADFILPVPMLNVINGGAHADNTIDFQEFMIMPVGAKTMAKALQMASEVFHSLQKLLKAKKFNTNKGDEGGFAPNLKSAEEALDLMSQAVVDAGYALGKDVAFALDCAASEFYSKEKQAYVFKKAVKAGILSEEKGTKTTEQLISYLEDLTKKYPIVSIEDGLDENDWKGMESLTKKIGKKVQIVGDDTYCTNPELTSKGVSLSATNSVLIKLNQIGTLTETIQTINIAKKANWTAVVSHRSGETEDAFIADLAVALSTGQIKTGSMSRSERIAKYNRLLAIEMQLGNKAKYLGSKTFYNLSTPAATPKKSPAKKTTKAKSKK.

Residue Gln179 participates in (2R)-2-phosphoglycerate binding. Glu221 functions as the Proton donor in the catalytic mechanism. Residues Asp258, Glu312, and Asp339 each contribute to the Mg(2+) site. 4 residues coordinate (2R)-2-phosphoglycerate: Lys364, Arg393, Ser394, and Lys415. The active-site Proton acceptor is the Lys364. The segment at 454–475 (STPAATPKKSPAKKTTKAKSKK) is disordered. The segment covering 463–475 (SPAKKTTKAKSKK) has biased composition (basic residues).

This sequence belongs to the enolase family. Mg(2+) is required as a cofactor.

It localises to the cell membrane. Its subcellular location is the cytoplasm. It is found in the secreted. The protein resides in the cell surface. The catalysed reaction is (2R)-2-phosphoglycerate = phosphoenolpyruvate + H2O. The protein operates within carbohydrate degradation; glycolysis; pyruvate from D-glyceraldehyde 3-phosphate: step 4/5. Its function is as follows. Catalyzes the reversible conversion of 2-phosphoglycerate (2-PG) into phosphoenolpyruvate (PEP). It is essential for the degradation of carbohydrates via glycolysis. Functionally, 'Moonlights' as a plasminogen receptor. Binds host (chicken) plasminogen; enolase antiserum inhibits M.gallisepticum adherence to chicken embryo fibroblasts. This is Enolase from Mycoplasmoides gallisepticum (strain R(low / passage 15 / clone 2)) (Mycoplasma gallisepticum).